The sequence spans 377 residues: Cell division cycle-associated protein 7 (377 aa).

Disordered regions lie at residues Arg58–Gly113 and Ile144–Lys211. The segment covering Pro76–Asp100 has biased composition (low complexity). The interval Arg148 to Arg173 is interaction with MYC. Positions Arg163–Arg179 match the Nuclear localization signal motif. Phosphothreonine is present on Thr166. Ser193 carries the post-translational modification Phosphoserine. Thr199 is subject to Phosphothreonine. Positions Thr199–Asp210 are enriched in acidic residues. Residue Lys211 forms a Glycyl lysine isopeptide (Lys-Gly) (interchain with G-Cter in SUMO2) linkage. Ser220 carries the phosphoserine modification. The segment at Glu253–Ala377 is mediates transcriptional activity.

Interacts with MYC (via C-terminus), YWHAE and YWHAZ. Post-translationally, phosphorylation at Thr-166 promotes interaction with YWHAE and YWHAZ, dissociation from MYC and sequestration in the cytoplasm.

The protein resides in the nucleus. It localises to the cytoplasm. Its function is as follows. Participates in MYC-mediated cell transformation and apoptosis; induces anchorage-independent growth and clonogenicity in lymphoblastoid cells. Insufficient to induce tumorigenicity when overexpressed but contributes to MYC-mediated tumorigenesis. May play a role as transcriptional regulator. This is Cell division cycle-associated protein 7 (Cdca7) from Rattus norvegicus (Rat).